Consider the following 22-residue polypeptide: Antimicrobial peptide 4 (22 aa).

As to expression, expressed by the skin glands.

The protein localises to the secreted. In terms of biological role, has very strong antimicrobial activity against Gram-positive bacterium S.aureus and yeast C.albicans, and very weak activity against Gram-negative bacterium E.coli. Has strong hemolytic activity against human red blood cells. The protein is Antimicrobial peptide 4 of Xenopus tropicalis (Western clawed frog).